The following is a 341-amino-acid chain: Protein FAM50A (341 aa).

Disordered stretches follow at residues 1–27 (MAQY…EREQ) and 80–147 (LVKE…EIEE). Over residues 80-115 (LVKEREKQLAKKEQSKELQLKLEKQKEKKRKEEQKR) the composition is skewed to basic and acidic residues. Residues 125 to 147 (DEGEDEEEEEEEEEEEEEDEIEE) show a composition bias toward acidic residues.

It belongs to the FAM50 family.

It is found in the nucleus. Its function is as follows. Probably involved in the regulation of pre-mRNA splicing. The polypeptide is Protein FAM50A (fam50a) (Danio rerio (Zebrafish)).